Consider the following 244-residue polypeptide: 5-oxoprolinase subunit A (244 aa).

Belongs to the LamB/PxpA family. As to quaternary structure, forms a complex composed of PxpA, PxpB and PxpC.

The catalysed reaction is 5-oxo-L-proline + ATP + 2 H2O = L-glutamate + ADP + phosphate + H(+). Catalyzes the cleavage of 5-oxoproline to form L-glutamate coupled to the hydrolysis of ATP to ADP and inorganic phosphate. In Citrobacter koseri (strain ATCC BAA-895 / CDC 4225-83 / SGSC4696), this protein is 5-oxoprolinase subunit A.